A 362-amino-acid chain; its full sequence is 5-amino-6-(D-ribitylamino)uracil--L-tyrosine 4-hydroxyphenyl transferase (362 aa).

The Radical SAM core domain occupies 48-294; the sequence is ITYVVNRNIN…GDTIKNIQVS (247 aa). [4Fe-4S] cluster-binding residues include cysteine 62, cysteine 66, and cysteine 69.

Belongs to the radical SAM superfamily. CofH family. Consists of two subunits, CofG and CofH. The cofactor is [4Fe-4S] cluster.

The enzyme catalyses 5-amino-6-(D-ribitylamino)uracil + L-tyrosine + S-adenosyl-L-methionine = 5-amino-5-(4-hydroxybenzyl)-6-(D-ribitylimino)-5,6-dihydrouracil + 2-iminoacetate + 5'-deoxyadenosine + L-methionine + H(+). The protein operates within cofactor biosynthesis; coenzyme F0 biosynthesis. In terms of biological role, catalyzes the radical-mediated synthesis of 5-amino-5-(4-hydroxybenzyl)-6-(D-ribitylimino)-5,6-dihydrouracil from 5-amino-6-(D-ribitylamino)uracil and L-tyrosine. The protein is 5-amino-6-(D-ribitylamino)uracil--L-tyrosine 4-hydroxyphenyl transferase of Methanococcus aeolicus (strain ATCC BAA-1280 / DSM 17508 / OCM 812 / Nankai-3).